The following is a 131-amino-acid chain: uncharacterized protein (131 aa).

Residues 4–44 (QKPEQDVNKKIEELEKKVQELQEQLEKTKQAVKTVASILDN) are a coiled coil.

This is an uncharacterized protein from Sulfolobus islandicus filamentous virus (isolate Iceland/Hveragerdi) (SIFV).